The sequence spans 377 residues: 3-dehydroquinate synthase (377 aa).

NAD(+) is bound by residues G113–D117, T137–T138, K150, and K159. E192, H254, and H273 together coordinate Zn(2+).

This sequence belongs to the sugar phosphate cyclases superfamily. Dehydroquinate synthase family. The cofactor is Co(2+). It depends on Zn(2+) as a cofactor. NAD(+) is required as a cofactor.

The protein localises to the cytoplasm. The catalysed reaction is 7-phospho-2-dehydro-3-deoxy-D-arabino-heptonate = 3-dehydroquinate + phosphate. It participates in metabolic intermediate biosynthesis; chorismate biosynthesis; chorismate from D-erythrose 4-phosphate and phosphoenolpyruvate: step 2/7. Catalyzes the conversion of 3-deoxy-D-arabino-heptulosonate 7-phosphate (DAHP) to dehydroquinate (DHQ). This is 3-dehydroquinate synthase from Bartonella bacilliformis (strain ATCC 35685 / KC583 / Herrer 020/F12,63).